We begin with the raw amino-acid sequence, 295 residues long: Probable isochorismatase (295 aa).

A disordered region spans residues 1 to 21 (MGIPKIAGYPLPTPAEFPDNR). Residues 207–286 (EIRSQKPLTL…EWWLVIEQAR (80 aa)) form the Carrier domain. Serine 247 is modified (O-(pantetheine 4'-phosphoryl)serine).

Belongs to the isochorismatase family. The cofactor is pantetheine 4'-phosphate.

The catalysed reaction is isochorismate + H2O = (2S,3S)-2,3-dihydroxy-2,3-dihydrobenzoate + pyruvate. It functions in the pathway siderophore biosynthesis; vulnibactin biosynthesis. Its function is as follows. Involved in the biosynthesis of the catechol siderophore vulnibactin. Vulnibactin is a chelating compound involved in transporting iron from the bacterial environment into the cell cytoplasm. This chain is Probable isochorismatase (venB), found in Vibrio vulnificus (strain CMCP6).